Reading from the N-terminus, the 141-residue chain is Protein X (141 aa).

Positions 25 to 52 (SSGPSFPRPAAGSAASSASSPSPSDDSD) are disordered. Positions 68–113 (PCCLVFTCADLRTMDSTVNFVSWHANRQLGMPSKDLWTPYIKDQLL) are mitochondrial targeting sequence.

Belongs to the orthohepadnavirus protein X family. As to quaternary structure, may form homodimer. May interact with host CEBPA, CFLAR, CREB1, DDB1, E4F1, HBXIP, HSPD1/HSP60, NFKBIA, POLR2E and SMAD4. Interacts with host SMC5-SMC6 complex and induces its degradation. Interacts with host TRPC4AP; leading to prevent ubiquitination of TRPC4AP. Interacts with host PLSCR1; this interaction promotes ubiquitination and degradation of HBx and impairs HBx-mediated cell proliferation. In terms of processing, a fraction may be phosphorylated in insect cells and HepG2 cells, a human hepatoblastoma cell line. Phosphorylated in vitro by host protein kinase C or mitogen-activated protein kinase. N-acetylated in insect cells.

The protein resides in the host cytoplasm. The protein localises to the host nucleus. Its subcellular location is the host mitochondrion. Functionally, multifunctional protein that plays a role in silencing host antiviral defenses and promoting viral transcription. Does not seem to be essential for HBV infection. May be directly involved in development of cirrhosis and liver cancer (hepatocellular carcinoma). Most of cytosolic activities involve modulation of cytosolic calcium. The effect on apoptosis is controversial depending on the cell types in which the studies have been conducted. May induce apoptosis by localizing in mitochondria and causing loss of mitochondrial membrane potential. May also modulate apoptosis by binding host CFLAR, a key regulator of the death-inducing signaling complex (DISC). Promotes viral transcription by using the host E3 ubiquitin ligase DDB1 to target the SMC5-SMC6 complex to proteasomal degradation. This host complex would otherwise bind to viral episomal DNA, and prevents its transcription. Moderately stimulates transcription of many different viral and cellular transcription elements. Promoters and enhancers stimulated by HBx contain DNA binding sites for NF-kappa-B, AP-1, AP-2, c-EBP, ATF/CREB, or the calcium-activated factor NF-AT. The chain is Protein X from Woodchuck hepatitis B virus (isolate 2) (WHV).